The chain runs to 97 residues: Homeobox protein HD-9 (97 aa).

The homeobox DNA-binding region spans 6-65 (MPAKKSRLSKAQRDFLDTYFEVNPHPNTQERAYIASQSLVSEEKIRNWFQNRRTRERGDC).

It is found in the nucleus. The protein is Homeobox protein HD-9 (HD-9) of Encephalitozoon cuniculi (strain GB-M1) (Microsporidian parasite).